The sequence spans 143 residues: Putative aryl-alcohol dehydrogenase AAD15 (143 aa).

Belongs to the aldo/keto reductase family. Aldo/keto reductase 2 subfamily.

In terms of biological role, putative aryl-alcohol dehydrogenase. The protein is Putative aryl-alcohol dehydrogenase AAD15 (AAD15) of Saccharomyces cerevisiae (strain ATCC 204508 / S288c) (Baker's yeast).